We begin with the raw amino-acid sequence, 205 residues long: Urease accessory protein UreE (205 aa).

A compositionally biased stretch (basic and acidic residues) spans Glu170–His192. Residues Glu170 to Arg205 form a disordered region.

It belongs to the UreE family.

It is found in the cytoplasm. Its function is as follows. Involved in urease metallocenter assembly. Binds nickel. Probably functions as a nickel donor during metallocenter assembly. This is Urease accessory protein UreE from Burkholderia pseudomallei (strain 668).